We begin with the raw amino-acid sequence, 266 residues long: Glycine--tRNA ligase beta subunit (266 aa).

The protein belongs to the class-II aminoacyl-tRNA synthetase family. Tetramer of two alpha and two beta subunits.

It is found in the cytoplasm. The enzyme catalyses tRNA(Gly) + glycine + ATP = glycyl-tRNA(Gly) + AMP + diphosphate. The protein is Glycine--tRNA ligase beta subunit (glyS) of Moraxella catarrhalis (Branhamella catarrhalis).